The chain runs to 228 residues: Vesicle transport protein SEC20 (228 aa).

The Cytoplasmic segment spans residues 1–199; sequence MAAPQDVHVR…LITKYNRREL (199 aa). Positions 37-90 form a coiled coil; the sequence is LSELTELNTKVKEKFQQLKQRIQELEQSAREQDKESEKQLLLQEVENHKKQMLS. The chain crosses the membrane as a helical; Anchor for type IV membrane protein span at residues 200–220; that stretch reads TDKLLIFLALALFLATVLYIV. Over 221-228 the chain is Lumenal; that stretch reads KKRLFPFL.

This sequence belongs to the SEC20 family. Component of a SNARE complex consisting of STX18, USE1L, BNIP1/SEC20L and SEC22B. Interacts directly with STX18, RINT1/TIP20L and NAPA. Interacts with ZW10 through RINT1. Interacts with BCL2. Interacts with RNF186. Interacts with RNF185. Interacts with SQSTM1; increased by 'Lys-63'-linked polyubiquitination of BNIP1. In terms of processing, polyubiquitinated. 'Lys-63'-linked polyubiquitination by RNF185 increases the interaction with the autophagy receptor SQSTM1. Undergoes 'Lys-29'- and 'Lys-63'-linked polyubiquitination by RNF186 that may regulate BNIP1 localization to the mitochondrion.

Its subcellular location is the endoplasmic reticulum membrane. It localises to the mitochondrion membrane. Functionally, as part of a SNARE complex may be involved in endoplasmic reticulum membranes fusion and be required for the maintenance of endoplasmic reticulum organization. Also plays a role in apoptosis. It is for instance required for endoplasmic reticulum stress-induced apoptosis. As a substrate of RNF185 interacting with SQSTM1, might also be involved in mitochondrial autophagy. This Mus musculus (Mouse) protein is Vesicle transport protein SEC20.